The following is a 355-amino-acid chain: Glucose-6-phosphatase 2 (355 aa).

The Lumenal segment spans residues 1-24 (MDFLHRNGVLIIQHLQKDYRAYYT). The chain crosses the membrane as a helical span at residues 25 to 45 (FLNFMSNVGDPRNIFFIYFPL). The Cytoplasmic portion of the chain corresponds to 46-56 (CFQFNQTVGTK). Residues 57-77 (MIWVAVIGDWLNLIFKWILFG) traverse the membrane as a helical segment. Residues 78–115 (HRPYWWVQETQIYPNHSSPCLEQFPTTCETGPGSPSGH) lie on the Lumenal side of the membrane. Residue R79 coordinates substrate. An N-linked (GlcNAc...) asparagine glycan is attached at N92. The active-site Proton donor is H115. A helical membrane pass occupies residues 116–136 (AMGASCVWYVMVTAALSHTVC). Residues 137 to 146 (GMDKFSITLH) are Cytoplasmic-facing. Residues 147-167 (RLTWSFLWSVFWLIQISVCIS) traverse the membrane as a helical segment. Position 168 (R168) is a topological domain, lumenal. R168 lines the substrate pocket. Residues 169–189 (VFIATHFPHQVILGVIGGMLV) form a helical membrane-spanning segment. The Nucleophile role is filled by H174. The Cytoplasmic portion of the chain corresponds to 190 to 211 (AEAFEHTPGIQTASLGTYLKTN). A helical transmembrane segment spans residues 212-232 (LFLFLFAVGFYLLLRVLNIDL). Over 233–261 (LWSVPIAKKWCANPDWIHIDTTPFAGLVR) the chain is Lumenal. The chain crosses the membrane as a helical span at residues 262 to 282 (NLGVLFGLGFAINSEMFLLSC). Residues 283 to 293 (RGGNNYTLSFR) are Cytoplasmic-facing. Residues 294–314 (LLCALTSLTILQLYHFLQIPT) traverse the membrane as a helical segment. Topologically, residues 315-318 (HEEH) are lumenal. Residues 319-339 (LFYVLSFCKSASIPLTVVAFI) form a helical membrane-spanning segment. Residues 340 to 355 (PYSVHMLMKQSGKKSQ) are Cytoplasmic-facing. The Prevents secretion from ER motif lies at 352-355 (KKSQ).

The protein belongs to the glucose-6-phosphatase family. Post-translationally, N-glycosylated; the non-glycosylated form is more unstable and is degraded through the proteasome. In terms of tissue distribution, specifically expressed in pancreas and also detected to a lower extent in testis. Expressed by most islet cells in the pancreas (at protein level).

The protein localises to the endoplasmic reticulum membrane. It carries out the reaction D-glucose 6-phosphate + H2O = D-glucose + phosphate. Its pathway is carbohydrate biosynthesis; gluconeogenesis. Functionally, may hydrolyze glucose-6-phosphate to glucose in the endoplasmic reticulum. May be responsible for glucose production through glycogenolysis and gluconeogenesis. This chain is Glucose-6-phosphatase 2 (G6PC2), found in Homo sapiens (Human).